A 431-amino-acid chain; its full sequence is Probable 3-hydroxy-3-methylglutaryl-coenzyme A reductase (431 aa).

Residues Glu85 and Asp278 each act as charge relay system in the active site. His375 acts as the Proton donor in catalysis.

Belongs to the HMG-CoA reductase family.

It carries out the reaction (R)-mevalonate + 2 NAD(+) + CoA = (3S)-3-hydroxy-3-methylglutaryl-CoA + 2 NADH + 2 H(+). It functions in the pathway metabolic intermediate metabolism; (R)-mevalonate degradation; (S)-3-hydroxy-3-methylglutaryl-CoA from (R)-mevalonate: step 1/1. Converts HMG-CoA to mevalonate. This Borreliella burgdorferi (strain ATCC 35210 / DSM 4680 / CIP 102532 / B31) (Borrelia burgdorferi) protein is Probable 3-hydroxy-3-methylglutaryl-coenzyme A reductase.